Here is a 417-residue protein sequence, read N- to C-terminus: Adenylosuccinate synthetase (417 aa).

Residues 11-17 and 39-41 contribute to the GTP site; these read GDEGKGK and GHT. D12 functions as the Proton acceptor in the catalytic mechanism. Positions 12 and 39 each coordinate Mg(2+). IMP contacts are provided by residues 12–15, 37–40, T126, R140, Q218, T233, and R295; these read DEGK and NAGH. H40 serves as the catalytic Proton donor. 291 to 297 lines the substrate pocket; sequence TVSGRIR. Residues R297, 323-325, and 406-408 each bind GTP; these read KLD and SNG.

It belongs to the adenylosuccinate synthetase family. As to quaternary structure, homodimer. The cofactor is Mg(2+).

The protein resides in the cytoplasm. The enzyme catalyses IMP + L-aspartate + GTP = N(6)-(1,2-dicarboxyethyl)-AMP + GDP + phosphate + 2 H(+). It functions in the pathway purine metabolism; AMP biosynthesis via de novo pathway; AMP from IMP: step 1/2. In terms of biological role, plays an important role in the de novo pathway of purine nucleotide biosynthesis. Catalyzes the first committed step in the biosynthesis of AMP from IMP. The protein is Adenylosuccinate synthetase of Neorickettsia sennetsu (strain ATCC VR-367 / Miyayama) (Ehrlichia sennetsu).